Reading from the N-terminus, the 641-residue chain is White-opaque regulator 3 (641 aa).

The span at 13-27 shows a compositional bias: polar residues; the sequence is ANVNHQQLSQDTNSI. Disordered regions lie at residues 13–38, 146–245, and 258–287; these read ANVN…QQQP, QLAS…PMTR, and PIIY…PEPR. Low complexity-rich tracts occupy residues 28-38 and 151-160; these read PQQQLQQQQQP and QNQDQNQSQN. A compositionally biased stretch (polar residues) spans 161-172; sequence RYEQSSMTSIHT. Low complexity predominate over residues 173 to 184; that stretch reads NDNSSSVNNSPN. Over residues 193-204 the composition is skewed to polar residues; it reads STFQPQHSNEGS. 2 stretches are compositionally biased toward low complexity: residues 216-242 and 264-280; these read QQQQ…PQQP and SSNS…NSSS. A dksA C4-type zinc finger spans residues 317–337; that stretch reads CRRCGSEIPLAERRFVLCPSC. Disordered stretches follow at residues 366 to 409, 480 to 507, 522 to 550, and 568 to 641; these read LSKE…KVCQ, MSHQ…PQPH, NSGV…HNGS, and LQLQ…YPNN. A compositionally biased stretch (basic and acidic residues) spans 379-400; that stretch reads QNNKSNEDQNNESRRGSQEKPA. The span at 486–495 shows a compositional bias: pro residues; it reads QPPPPPPPPL. The segment covering 522–533 has biased composition (polar residues); the sequence is NSGVAGIQQPNN. Residues 569–579 show a composition bias toward low complexity; that stretch reads QLQQQQQQQQQ. Positions 597-606 are enriched in pro residues; that stretch reads SFPPPPPPPL. Low complexity predominate over residues 610–641; sequence QHQGLQQYSHAQQQQQQQHQQQQPYHQEYPNN.

Its subcellular location is the nucleus. Transcription factor that modulates the white-opaque switch. The protein is White-opaque regulator 3 (WOR3) of Candida albicans (strain SC5314 / ATCC MYA-2876) (Yeast).